The sequence spans 462 residues: ATP synthase subunit beta (462 aa).

152–159 is an ATP binding site; that stretch reads GGAGVGKT.

Belongs to the ATPase alpha/beta chains family. As to quaternary structure, F-type ATPases have 2 components, CF(1) - the catalytic core - and CF(0) - the membrane proton channel. CF(1) has five subunits: alpha(3), beta(3), gamma(1), delta(1), epsilon(1). CF(0) has three main subunits: a(1), b(2) and c(9-12). The alpha and beta chains form an alternating ring which encloses part of the gamma chain. CF(1) is attached to CF(0) by a central stalk formed by the gamma and epsilon chains, while a peripheral stalk is formed by the delta and b chains.

The protein resides in the cell inner membrane. It catalyses the reaction ATP + H2O + 4 H(+)(in) = ADP + phosphate + 5 H(+)(out). Its function is as follows. Produces ATP from ADP in the presence of a proton gradient across the membrane. The catalytic sites are hosted primarily by the beta subunits. The chain is ATP synthase subunit beta from Shewanella amazonensis (strain ATCC BAA-1098 / SB2B).